A 128-amino-acid polypeptide reads, in one-letter code: Phosphoribosyl-AMP cyclohydrolase (128 aa).

Residue Asp77 coordinates Mg(2+). Cys78 is a binding site for Zn(2+). Mg(2+)-binding residues include Asp79 and Asp81. Zn(2+)-binding residues include Cys95 and Cys102.

It belongs to the PRA-CH family. Homodimer. Mg(2+) serves as cofactor. The cofactor is Zn(2+).

It localises to the cytoplasm. The enzyme catalyses 1-(5-phospho-beta-D-ribosyl)-5'-AMP + H2O = 1-(5-phospho-beta-D-ribosyl)-5-[(5-phospho-beta-D-ribosylamino)methylideneamino]imidazole-4-carboxamide. Its pathway is amino-acid biosynthesis; L-histidine biosynthesis; L-histidine from 5-phospho-alpha-D-ribose 1-diphosphate: step 3/9. Functionally, catalyzes the hydrolysis of the adenine ring of phosphoribosyl-AMP. The protein is Phosphoribosyl-AMP cyclohydrolase of Methylococcus capsulatus (strain ATCC 33009 / NCIMB 11132 / Bath).